The primary structure comprises 91 residues: Uteroglobin (91 aa).

The signal sequence occupies residues Met-1–Ala-21.

It belongs to the secretoglobin family. Antiparallel homodimer; disulfide-linked. Interaction with LMBR1L is controversial. Club cells (nonciliated cells of the surface epithelium of the pulmonary airways). Expressed in lung, uterus, and prostate.

The protein localises to the secreted. Its function is as follows. Binds phosphatidylcholine, phosphatidylinositol, polychlorinated biphenyls (PCB) and weakly progesterone, potent inhibitor of phospholipase A2. In Equus caballus (Horse), this protein is Uteroglobin (SCGB1A1).